Reading from the N-terminus, the 525-residue chain is Probable malate:quinone oxidoreductase (525 aa).

The protein belongs to the MQO family. Requires FAD as cofactor.

It catalyses the reaction (S)-malate + a quinone = a quinol + oxaloacetate. It participates in carbohydrate metabolism; tricarboxylic acid cycle; oxaloacetate from (S)-malate (quinone route): step 1/1. The chain is Probable malate:quinone oxidoreductase from Serratia proteamaculans (strain 568).